The sequence spans 50 residues: U37-theraphotoxin-Cg1a (50 aa).

An N-terminal signal peptide occupies residues 1-19; it reads MRVLLIIAGLALLSVVCYT.

This sequence belongs to the neurotoxin 10 (Hwtx-1) family. 67 (Jztx-67) subfamily. As to expression, expressed by the venom gland.

It is found in the secreted. The polypeptide is U37-theraphotoxin-Cg1a (Chilobrachys guangxiensis (Chinese earth tiger tarantula)).